The primary structure comprises 574 residues: MELLILKANAITTILTAVTFCFASGQNITEEFYQSTCSAVSKGYLSALRTGWYTSVITIELSNIKENKCNGTDAKVKLIKQELDKYKNAVTELQLLMQSTPPTNNRARRELPRFMNYTLNNAKKTNVTLSKKRKRRFLGFLLGVGSAIASGVAVSKVLHLEGEVNKIKSALLSTNKAVVSLSNGVSVLTSKVLDLKNYIDKQLLPIVNKQSCSISNIETVIEFQQKNNRLLEITREFSVNAGVTTPVSTYMLTNSELLSLINDMPITNDQKKLMSNNVQIVRQQSYSIMSIIKEEVLAYVVQLPLYGVIDTPCWKLHTSPLCTTNTKEGSNICLTRTDRGWYCDNAGSVSFFPQAETCKVQSNRVFCDTMNSLTLPSEINLCNVDIFNPKYDCKIMTSKTDVSSSVITSLGAIVSCYGKTKCTASNKNRGIIKTFSNGCDYVSNKGMDTVSVGNTLYYVNKQEGKSLYVKGEPIINFYDPLVFPSDEFDASISQVNEKINQSLAFIRKSDELLHNVNAGKSTTNIMITTIIIVIIVILLSLIAVGLLLYCKARSTPVTLSKDQLSGINNIAFSN.

Positions 1-25 (MELLILKANAITTILTAVTFCFASG) are cleaved as a signal peptide. The Extracellular segment spans residues 26–524 (QNITEEFYQS…NVNAGKSTTN (499 aa)). 2 N-linked (GlcNAc...) asparagine; by host glycosylation sites follow: Asn27 and Asn70. Cystine bridges form between Cys37–Cys439, Cys69–Cys212, Cys313–Cys343, Cys322–Cys333, Cys358–Cys367, Cys382–Cys393, and Cys416–Cys422. The stretch at 76–96 (VKLIKQELDKYKNAVTELQLL) forms a coiled coil. N-linked (GlcNAc...) asparagine; by host glycosylation is found at Asn116, Asn120, and Asn126. Residues 137-157 (FLGFLLGVGSAIASGVAVSKV) form a fusion peptide region. The stretch at 158–209 (LHLEGEVNKIKSALLSTNKAVVSLSNGVSVLTSKVLDLKNYIDKQLLPIVNK) forms a coiled coil. Residues 481–516 (LVFPSDEFDASISQVNEKINQSLAFIRKSDELLHNV) adopt a coiled-coil conformation. Asn500 carries N-linked (GlcNAc...) asparagine; by host glycosylation. Residues 525–550 (IMITTIIIVIIVILLSLIAVGLLLYC) traverse the membrane as a helical segment. The S-palmitoyl cysteine; by host moiety is linked to residue Cys550. Over 551-574 (KARSTPVTLSKDQLSGINNIAFSN) the chain is Cytoplasmic.

Belongs to the paramyxoviruses fusion glycoprotein family. As to quaternary structure, homotrimer. Heterodimer with fusion protein F2; disulfide-linked. Interacts with host NCL; this interaction plays a role in viral entry into the host cell. As a heterodimer with F2, interacts with host heparan sulfate. As a heterodimer with F2, interacts with host IGF1R; this interaction activates PRKCZ/PKCzeta that recruits NCL/nucleolin from the host nucleus to the plasma membrane. Part of a complex composed of F1, F2 and G glycoproteins. As a heterodimer with F2, interacts with host RHOA; this interaction facilitates virus-induced syncytium formation. In terms of assembly, homotrimer. Heterodimer with fusion protein F1; disulfide-linked. As a heterodimer with F1, interacts with host heparan sulfate. As a heterodimer with F1, interacts with host IGF1R; this interaction activates PRKCZ/PKCzeta that recruits NCL/nucleolin from the host nucleus to the plasma membrane. Part of a complex composed of F1, F2 and G glycoproteins. As a heterodimer with F1, interacts with host RHOA; this interaction facilitates virus-induced syncytium formation. Post-translationally, the F glycoprotein is synthesized as a F0 inactive precursor that is heavily N-glycosylated and processed at two sites by a host furin-like protease probably in the Golgi. The cleavage site between p27 and F1 may occur after endocytosis to yield the mature F1 and F2 proteins. Both cleavages are required for membrane fusion and p27 is released from the processed protein.

Its subcellular location is the host Golgi apparatus membrane. It localises to the virion membrane. The protein resides in the host cell membrane. Functionally, inactive precursor that is cleaved at two sites by a furin-like protease to give rise to the mature F1 and F2 fusion glycoproteins. Class I viral fusion protein. Under the current model, the protein has at least 3 conformational states: pre-fusion native state, pre-hairpin intermediate state, and post-fusion hairpin state. During viral and plasma cell membrane fusion, the coiled coil regions assume a trimer-of-hairpins structure, positioning the fusion peptide in close proximity to the C-terminal region of the ectodomain. The formation of this structure appears to drive apposition and subsequent fusion of viral and cellular membranes leading to delivery of the nucleocapsid into the cytoplasm. This fusion is pH independent and occurs at the plasma or endosomal membrane. The trimer of F1-F2 (F protein) also facilitates the attachment to host cell by binding to host heparan sulfate. F protein is involved in the entry into the host cell through the interaction with host IGF1R. This interaction activates PRKCZ/PKCzeta that recruits host NCL/nucleolin to the apical cell surface where it can bind fusion glycoprotein F1. Later in infection, F protein expressed at the plasma membrane of infected cells can mediate fusion with adjacent cells to form syncytia, a cytopathic effect that could lead to tissue necrosis. F protein may trigger p53-dependent apoptosis. Its function is as follows. Major determinant of the species specificity of RSV infection. The trimer of F1-F2 (F protein) also facilitates the attachment to host cell by binding to host heparan sulfate. F protein is involved in the entry into the host cell through the interaction with host IGF1R. This interaction activates PRKCZ/PKCzeta that recruits host NCL/nucleolin to the apical cell surface where it can bind fusion glycoprotein F1. Later in infection, F protein expressed at the plasma membrane of infected cells can mediate fusion with adjacent cells to form syncytia, a cytopathic effect that could lead to tissue necrosis. F protein seems to trigger p53-dependent apoptosis. The protein is Fusion glycoprotein F0 (F) of Human respiratory syncytial virus A (strain A2).